We begin with the raw amino-acid sequence, 184 residues long: ATP synthase subunit b, chloroplastic (184 aa).

A helical membrane pass occupies residues Leu27–Leu49.

The protein belongs to the ATPase B chain family. F-type ATPases have 2 components, F(1) - the catalytic core - and F(0) - the membrane proton channel. F(1) has five subunits: alpha(3), beta(3), gamma(1), delta(1), epsilon(1). F(0) has four main subunits: a(1), b(1), b'(1) and c(10-14). The alpha and beta chains form an alternating ring which encloses part of the gamma chain. F(1) is attached to F(0) by a central stalk formed by the gamma and epsilon chains, while a peripheral stalk is formed by the delta, b and b' chains.

The protein localises to the plastid. The protein resides in the chloroplast thylakoid membrane. F(1)F(0) ATP synthase produces ATP from ADP in the presence of a proton or sodium gradient. F-type ATPases consist of two structural domains, F(1) containing the extramembraneous catalytic core and F(0) containing the membrane proton channel, linked together by a central stalk and a peripheral stalk. During catalysis, ATP synthesis in the catalytic domain of F(1) is coupled via a rotary mechanism of the central stalk subunits to proton translocation. In terms of biological role, component of the F(0) channel, it forms part of the peripheral stalk, linking F(1) to F(0). The polypeptide is ATP synthase subunit b, chloroplastic (Lobularia maritima (Sweet alyssum)).